The chain runs to 241 residues: NH(3)-dependent NAD(+) synthetase (241 aa).

27–34 (GISGGIDS) contributes to the ATP binding site. Asp33 contributes to the Mg(2+) binding site. Arg109 is a binding site for deamido-NAD(+). ATP is bound at residue Thr129. Glu134 serves as a coordination point for Mg(2+). Deamido-NAD(+) contacts are provided by Lys142 and Asp149. ATP-binding residues include Lys158 and Thr180. 231–232 (HK) serves as a coordination point for deamido-NAD(+).

Belongs to the NAD synthetase family. Homodimer.

It carries out the reaction deamido-NAD(+) + NH4(+) + ATP = AMP + diphosphate + NAD(+) + H(+). Its pathway is cofactor biosynthesis; NAD(+) biosynthesis; NAD(+) from deamido-NAD(+) (ammonia route): step 1/1. Functionally, catalyzes the ATP-dependent amidation of deamido-NAD to form NAD. Uses ammonia as a nitrogen source. This chain is NH(3)-dependent NAD(+) synthetase, found in Thermoplasma acidophilum (strain ATCC 25905 / DSM 1728 / JCM 9062 / NBRC 15155 / AMRC-C165).